The following is a 438-amino-acid chain: Histidinol dehydrogenase (438 aa).

NAD(+) is bound by residues Y137, Q198, and N221. Residues S244, Q266, and H269 each contribute to the substrate site. Residues Q266 and H269 each coordinate Zn(2+). Catalysis depends on proton acceptor residues E334 and H335. Substrate-binding residues include H335, D368, E422, and H427. D368 is a binding site for Zn(2+). H427 contributes to the Zn(2+) binding site.

It belongs to the histidinol dehydrogenase family. The cofactor is Zn(2+).

It catalyses the reaction L-histidinol + 2 NAD(+) + H2O = L-histidine + 2 NADH + 3 H(+). It participates in amino-acid biosynthesis; L-histidine biosynthesis; L-histidine from 5-phospho-alpha-D-ribose 1-diphosphate: step 9/9. Functionally, catalyzes the sequential NAD-dependent oxidations of L-histidinol to L-histidinaldehyde and then to L-histidine. In Aromatoleum aromaticum (strain DSM 19018 / LMG 30748 / EbN1) (Azoarcus sp. (strain EbN1)), this protein is Histidinol dehydrogenase.